We begin with the raw amino-acid sequence, 149 residues long: D-aminoacyl-tRNA deacylase (149 aa).

The short motif at 139-140 (GP) is the Gly-cisPro motif, important for rejection of L-amino acids element.

It belongs to the DTD family. Homodimer.

It localises to the cytoplasm. It carries out the reaction glycyl-tRNA(Ala) + H2O = tRNA(Ala) + glycine + H(+). The catalysed reaction is a D-aminoacyl-tRNA + H2O = a tRNA + a D-alpha-amino acid + H(+). Functionally, an aminoacyl-tRNA editing enzyme that deacylates mischarged D-aminoacyl-tRNAs. Also deacylates mischarged glycyl-tRNA(Ala), protecting cells against glycine mischarging by AlaRS. Acts via tRNA-based rather than protein-based catalysis; rejects L-amino acids rather than detecting D-amino acids in the active site. By recycling D-aminoacyl-tRNA to D-amino acids and free tRNA molecules, this enzyme counteracts the toxicity associated with the formation of D-aminoacyl-tRNA entities in vivo and helps enforce protein L-homochirality. The protein is D-aminoacyl-tRNA deacylase (DTD1) of Candida glabrata (strain ATCC 2001 / BCRC 20586 / JCM 3761 / NBRC 0622 / NRRL Y-65 / CBS 138) (Yeast).